Reading from the N-terminus, the 325-residue chain is Probable flavonol synthase 5 (325 aa).

The interval 1-21 (MEEERDHNASESSLPSLSKQL) is disordered. Polar residues predominate over residues 10–21 (SESSLPSLSKQL). Positions 180–280 (TAEYVLRVNF…RISWPVFVAP (101 aa)) constitute a Fe2OG dioxygenase domain. 188–190 (NFY) is a binding site for 2-oxoglutarate. Fe cation contacts are provided by His205, Asp207, and His261. 271-273 (RIS) is a binding site for 2-oxoglutarate.

Belongs to the iron/ascorbate-dependent oxidoreductase family. It depends on Fe(2+) as a cofactor. In terms of tissue distribution, expressed in young seedlings.

The enzyme catalyses a (2R,3R)-dihydroflavonol + 2-oxoglutarate + O2 = a flavonol + succinate + CO2 + H2O. Its pathway is secondary metabolite biosynthesis; flavonoid biosynthesis. The chain is Probable flavonol synthase 5 (FLS5) from Arabidopsis thaliana (Mouse-ear cress).